A 517-amino-acid polypeptide reads, in one-letter code: MDIIGGQHLRQMWDDLADVYGHKTALICESSGGVVNRYSYLELNQEINRTANLFYTLGIRKGDKVALHLDNCPEFIFCWFGLAKIGAIMVPINARLLCEESAWILQNSQACLLVTSAQFYPMYQQIQQEDATQLRHICLTDVALPADDGVSSFTQLKNQQPATLCYAPPLSTDDTAEILFTSGTTSRPKGVVITHYNLRFAGYYSAWQCALRDDDVYLTVMPAFHIDCQCTAAMAAFSAGATFVLVEKYSARAFWGQVQKYRATVTECIPMMIRTLMVQPPSANDQQHRLREVMFYLNLSEQEKDAFCERFGVRLLTSYGMTETIVGIIGDRPGDKRRWPSIGRVGFCYEAEIRDDHNRPLPAGEIGEICIKGIPGKTIFKEYFLNPQATAKVLEADGWLHTGDTGYRDEEDFFYFVDRRCNMIKRGGENVSCVELENIIAAHPKIQDIVVVGIKDSIRDEAIKAFVVLNEGETLSEEEFFRFCEQNMAKFKVPSYLEIRKDLPRNCSGKIIRKNLK.

Belongs to the ATP-dependent AMP-binding enzyme family.

It carries out the reaction 4-(trimethylamino)butanoate + ATP + CoA = 4-(trimethylamino)butanoyl-CoA + AMP + diphosphate. It catalyses the reaction crotonobetaine + ATP + CoA = crotonobetainyl-CoA + AMP + diphosphate. The enzyme catalyses (R)-carnitine + ATP + CoA = (R)-carnitinyl-CoA + AMP + diphosphate. Its pathway is amine and polyamine metabolism; carnitine metabolism. In terms of biological role, catalyzes the transfer of CoA to carnitine, generating the initial carnitinyl-CoA needed for the CaiB reaction cycle. Also has activity toward crotonobetaine and gamma-butyrobetaine. In Escherichia coli (strain K12 / MC4100 / BW2952), this protein is Crotonobetaine/carnitine--CoA ligase.